Reading from the N-terminus, the 762-residue chain is 5-methyltetrahydropteroyltriglutamate--homocysteine methyltransferase (762 aa).

5-methyltetrahydropteroyltri-L-glutamate contacts are provided by residues 17-20 (REWK) and K111. L-homocysteine contacts are provided by residues 435–437 (IGS) and E488. L-methionine contacts are provided by residues 435–437 (IGS) and E488. 5-methyltetrahydropteroyltri-L-glutamate is bound by residues 519 to 520 (RC) and W565. Residue D603 coordinates L-homocysteine. D603 is an L-methionine binding site. Position 609 (E609) interacts with 5-methyltetrahydropteroyltri-L-glutamate. Zn(2+)-binding residues include H645, C647, and E669. Residue H698 is the Proton donor of the active site. Residue C730 coordinates Zn(2+).

It belongs to the vitamin-B12 independent methionine synthase family. Requires Zn(2+) as cofactor.

It carries out the reaction 5-methyltetrahydropteroyltri-L-glutamate + L-homocysteine = tetrahydropteroyltri-L-glutamate + L-methionine. It participates in amino-acid biosynthesis; L-methionine biosynthesis via de novo pathway; L-methionine from L-homocysteine (MetE route): step 1/1. Catalyzes the transfer of a methyl group from 5-methyltetrahydrofolate to homocysteine resulting in methionine formation. In Bacillus thuringiensis (strain Al Hakam), this protein is 5-methyltetrahydropteroyltriglutamate--homocysteine methyltransferase.